A 283-amino-acid polypeptide reads, in one-letter code: Pantothenate synthetase (283 aa).

ATP is bound at residue 30–37 (MGNLHDGH). His37 serves as the catalytic Proton donor. Gln61 is a (R)-pantoate binding site. Gln61 contributes to the beta-alanine binding site. Residue 149 to 152 (GEKD) participates in ATP binding. Gln155 is a (R)-pantoate binding site. 186-189 (LSSR) is a binding site for ATP.

The protein belongs to the pantothenate synthetase family. As to quaternary structure, homodimer.

It localises to the cytoplasm. It carries out the reaction (R)-pantoate + beta-alanine + ATP = (R)-pantothenate + AMP + diphosphate + H(+). It functions in the pathway cofactor biosynthesis; (R)-pantothenate biosynthesis; (R)-pantothenate from (R)-pantoate and beta-alanine: step 1/1. In terms of biological role, catalyzes the condensation of pantoate with beta-alanine in an ATP-dependent reaction via a pantoyl-adenylate intermediate. The sequence is that of Pantothenate synthetase from Escherichia coli O127:H6 (strain E2348/69 / EPEC).